We begin with the raw amino-acid sequence, 910 residues long: Protein translocase subunit SecA (910 aa).

ATP-binding positions include glutamine 86, 104–108, and aspartate 508; that span reads GEGKT. Zn(2+) contacts are provided by cysteine 894, cysteine 896, cysteine 905, and cysteine 906.

It belongs to the SecA family. In terms of assembly, monomer and homodimer. Part of the essential Sec protein translocation apparatus which comprises SecA, SecYEG and auxiliary proteins SecDF. Other proteins may also be involved. The cofactor is Zn(2+).

It is found in the cell membrane. It localises to the cytoplasm. The catalysed reaction is ATP + H2O + cellular proteinSide 1 = ADP + phosphate + cellular proteinSide 2.. In terms of biological role, part of the Sec protein translocase complex. Interacts with the SecYEG preprotein conducting channel. Has a central role in coupling the hydrolysis of ATP to the transfer of proteins into and across the cell membrane, serving as an ATP-driven molecular motor driving the stepwise translocation of polypeptide chains across the membrane. The protein is Protein translocase subunit SecA of Acetivibrio thermocellus (strain ATCC 27405 / DSM 1237 / JCM 9322 / NBRC 103400 / NCIMB 10682 / NRRL B-4536 / VPI 7372) (Clostridium thermocellum).